Here is a 353-residue protein sequence, read N- to C-terminus: Methylthioribose-1-phosphate isomerase (353 aa).

Residues arginine 48–alanine 50, arginine 94, and glutamine 201 contribute to the substrate site. Catalysis depends on aspartate 242, which acts as the Proton donor. Asparagine 252–lysine 253 contributes to the substrate binding site.

This sequence belongs to the eIF-2B alpha/beta/delta subunits family. MtnA subfamily.

The catalysed reaction is 5-(methylsulfanyl)-alpha-D-ribose 1-phosphate = 5-(methylsulfanyl)-D-ribulose 1-phosphate. The protein operates within amino-acid biosynthesis; L-methionine biosynthesis via salvage pathway; L-methionine from S-methyl-5-thio-alpha-D-ribose 1-phosphate: step 1/6. Its function is as follows. Catalyzes the interconversion of methylthioribose-1-phosphate (MTR-1-P) into methylthioribulose-1-phosphate (MTRu-1-P). In Roseiflexus sp. (strain RS-1), this protein is Methylthioribose-1-phosphate isomerase.